The sequence spans 403 residues: tRNA(Met) cytidine acetate ligase (403 aa).

ATP is bound by residues 7–20 (VVEYNPFHNGHAYH), Gly101, Asn164, and 189–190 (RI).

It belongs to the TmcAL family.

It localises to the cytoplasm. The catalysed reaction is cytidine(34) in elongator tRNA(Met) + acetate + ATP = N(4)-acetylcytidine(34) in elongator tRNA(Met) + AMP + diphosphate. Catalyzes the formation of N(4)-acetylcytidine (ac(4)C) at the wobble position of elongator tRNA(Met), using acetate and ATP as substrates. First activates an acetate ion to form acetyladenylate (Ac-AMP) and then transfers the acetyl group to tRNA to form ac(4)C34. The sequence is that of tRNA(Met) cytidine acetate ligase from Lysinibacillus sphaericus (strain C3-41).